Reading from the N-terminus, the 236-residue chain is Ubiquinone biosynthesis O-methyltransferase (236 aa).

Positions 36, 56, 77, and 125 each coordinate S-adenosyl-L-methionine.

Belongs to the methyltransferase superfamily. UbiG/COQ3 family.

It catalyses the reaction a 3-demethylubiquinol + S-adenosyl-L-methionine = a ubiquinol + S-adenosyl-L-homocysteine + H(+). The catalysed reaction is a 3-(all-trans-polyprenyl)benzene-1,2-diol + S-adenosyl-L-methionine = a 2-methoxy-6-(all-trans-polyprenyl)phenol + S-adenosyl-L-homocysteine + H(+). It functions in the pathway cofactor biosynthesis; ubiquinone biosynthesis. O-methyltransferase that catalyzes the 2 O-methylation steps in the ubiquinone biosynthetic pathway. In Glaesserella parasuis serovar 5 (strain SH0165) (Haemophilus parasuis), this protein is Ubiquinone biosynthesis O-methyltransferase.